Reading from the N-terminus, the 134-residue chain is Holo-[acyl-carrier-protein] synthase (134 aa).

Residues Asp-8 and Glu-57 each contribute to the Mg(2+) site.

It belongs to the P-Pant transferase superfamily. AcpS family. The cofactor is Mg(2+).

The protein resides in the cytoplasm. It catalyses the reaction apo-[ACP] + CoA = holo-[ACP] + adenosine 3',5'-bisphosphate + H(+). In terms of biological role, transfers the 4'-phosphopantetheine moiety from coenzyme A to a Ser of acyl-carrier-protein. This Agrobacterium fabrum (strain C58 / ATCC 33970) (Agrobacterium tumefaciens (strain C58)) protein is Holo-[acyl-carrier-protein] synthase.